A 473-amino-acid polypeptide reads, in one-letter code: Bifunctional NAD(P)H-hydrate repair enzyme Nnr (473 aa).

The tract at residues Met-1 to Ala-211 is NAD(P)H-hydrate epimerase. The region spanning Ile-10–Asp-205 is the YjeF N-terminal domain. Residues Asp-62–Asp-66 form an NADPHX 1; for epimerase activity region. Asn-63 and Asp-119 together coordinate K(+). Residues Gly-123–Pro-129 are NADPHX 1; for epimerase activity. Position 152 (Asp-152) interacts with (6S)-NADPHX. Residue Ser-155 participates in K(+) binding. The YjeF C-terminal domain occupies Glu-210–Leu-473. Residues Ala-211–Leu-473 form an ADP-dependent (S)-NAD(P)H-hydrate dehydratase region. Gly-298 is a (6S)-NADPHX binding site. An NADPHX 2; for dehydratase activity region spans residues His-348–Arg-354. Residues Lys-382 to Thr-386 and Gln-402 to Gly-411 each bind ADP. Asp-412 contacts (6S)-NADPHX.

In the N-terminal section; belongs to the NnrE/AIBP family. It in the C-terminal section; belongs to the NnrD/CARKD family. K(+) is required as a cofactor.

It catalyses the reaction (6S)-NADHX + ADP = AMP + phosphate + NADH + H(+). It carries out the reaction (6S)-NADPHX + ADP = AMP + phosphate + NADPH + H(+). The catalysed reaction is (6R)-NADHX = (6S)-NADHX. The enzyme catalyses (6R)-NADPHX = (6S)-NADPHX. Its function is as follows. Bifunctional enzyme that catalyzes the epimerization of the S- and R-forms of NAD(P)HX and the dehydration of the S-form of NAD(P)HX at the expense of ADP, which is converted to AMP. This allows the repair of both epimers of NAD(P)HX, a damaged form of NAD(P)H that is a result of enzymatic or heat-dependent hydration. In Mycobacterium tuberculosis (strain CDC 1551 / Oshkosh), this protein is Bifunctional NAD(P)H-hydrate repair enzyme Nnr (nnr).